We begin with the raw amino-acid sequence, 1218 residues long: NACHT, LRR and PYD domains-containing protein 1a allele 5 (1218 aa).

Over residues 1 to 29 (MGESQSKQESNTRVAQHGSQQDVDPTFQT) the composition is skewed to polar residues. 2 disordered regions span residues 1-44 (MGES…QVEQ) and 71-91 (EMDH…DRSE). The segment covering 77 to 87 (RRHSHQSKKKL) has biased composition (basic residues). The region spanning 175 to 484 (QLVIIEGAAG…EFFAAMSYIL (310 aa)) is the NACHT domain. 181 to 188 (GAAGIGKS) is an ATP binding site. LRR repeat units follow at residues 343-364 (KERN…LTLC), 673-693 (NLEE…RSLC), and 730-750 (RLAE…RQLC). Residues 799 to 815 (TMPTENTDGEESLTSSK) show a composition bias toward polar residues. A disordered region spans residues 799–842 (TMPTENTDGEESLTSSKQQQQQSGDKHMEPLGTDDDFWGPSGPV). A ZU5 region spans residues 835-968 (FWGPSGPVST…HFAVLENPSF (134 aa)). The FIIND domain maps to 835 to 1118 (FWGPSGPVST…LRPALPRMAS (284 aa)). The interval 969–1118 (SPMGVLLRMI…LRPALPRMAS (150 aa)) is UPA. Residues 1122–1211 (DAPALLHFVD…HLIMDLLEKS (90 aa)) form the CARD domain.

The protein belongs to the NLRP family. Interacts (via LRR repeats) with BCL2 and BCL2L1 (via the loop between motifs BH4 and BH3). Interacts with NOD2; this interaction is enhanced in the presence of muramyl dipeptide (MDP) and increases IL1B release. Interacts with EIF2AK2/PKR; this interaction requires EIF2AK2 activity, is accompanied by EIF2AK2 autophosphorylation and promotes inflammasome assembly in response to danger-associated signals. Interacts with MEFV; this interaction targets Nlrp1a to degradation by autophagy, hence preventing excessive IL1B- and IL18-mediated inflammation. Interacts with DPP9; leading to inhibit activation of the inflammasome. DPP9 acts via formation of a ternary complex, composed of a DPP9 homodimer, one full-length NLRP1 protein, and one cleaved C-terminus of Nlrp1a (NACHT, LRR and PYD domains-containing protein 1a, C-terminus). Interacts with DPP8; leading to inhibit activation of the inflammasome, probably via formation of a ternary complex with DPP8. As to quaternary structure, interacts with the C-terminal part of Nlrp1a (NACHT, LRR and PYD domains-containing protein 1a, C-terminus) in absence of pathogens and other damage-associated signals. In terms of assembly, interacts with the N-terminal part of Nlrp1a (NACHT, LRR and PYD domains-containing protein 1a, N-terminus) in absence of pathogens and other damage-associated signals. Homomultimer; forms the Nlrp1a inflammasome polymeric complex, a filament composed of homopolymers of this form in response to pathogens and other damage-associated signals. The Nlrp1a inflammasome polymeric complex directly recruits pro-caspase-1 (proCASP1) independently of PYCARD/ASC. Interacts (via CARD domain) with CASP1 (via CARD domain); leading to CASP1 activation. Autocatalytically cleaved. Autocatalytic cleavage in FIIND region occurs constitutively, prior to activation signals, and is required for inflammasome activity (IL1B release), possibly by facilitating CASP1 binding. Both N- and C-terminal parts remain associated non-covalently. In terms of processing, ubiquitinated in response to pathogen-associated signals, leading to its degradation by the proteasome and subsequent release of the cleaved C-terminal part of the protein (NACHT, LRR and PYD domains-containing protein 1a, C-terminus), which polymerizes and forms the Nlrp1a inflammasome.

The protein localises to the cytoplasm. Its subcellular location is the cytosol. It localises to the nucleus. The protein resides in the inflammasome. Activated by pathogens and other damage-associated signals: activation promotes ubiquitination and degradation of the N-terminal part, releasing the cleaved C-terminal part of the protein (NACHT, LRR and PYD domains-containing protein 1a, C-terminus), which polymerizes and forms the Nlrp1a inflammasome. Nlrp1a inflammasome is inhibited by DPP8 and DPP9, which sequester the C-terminal fragment of Nlrp1a (NACHT, LRR and PYD domains-containing protein 1a, C-terminus) in a ternary complex, thereby preventing Nlrp1a oligomerization and activation. Nlrp1a inflammasome is strongly activated by Val-boroPro (Talabostat, PT-100), an inhibitor of dipeptidyl peptidases DPP8 and DPP9. Val-boroPro relieves inhibition of DPP8 and/or DPP9 by promoting disruption of the ternary complex, releasing its C-terminal part from autoinhibition. Not activated by cleavage by B.anthracis lethal toxin (LT) endopeptidase. Highly activated by Toxoplasma gondii. Acts as the sensor component of the Nlrp1a inflammasome, which mediates inflammasome activation in response to various pathogen-associated signals, leading to subsequent pyroptosis. Inflammasomes are supramolecular complexes that assemble in the cytosol in response to pathogens and other damage-associated signals and play critical roles in innate immunity and inflammation. Acts as a recognition receptor (PRR): recognizes specific pathogens and other damage-associated signals, such as Val-boroPro inhibitor, and mediates the formation of the inflammasome polymeric complex. In response to pathogen-associated signals, the N-terminal part of Nlrp1a is degraded by the proteasome, releasing the cleaved C-terminal part of the protein (NACHT, LRR and PYD domains-containing protein 1a, C-terminus), which polymerizes to initiate the formation of the inflammasome complex: the inflammasome directly recruits pro-caspase-1 (proCASP1) independently of PYCARD/ASC and promotes caspase-1 (CASP1) activation, which subsequently cleaves and activates inflammatory cytokines IL1B and IL18 and gasdermin-D (GSDMD), leading to pyroptosis. In the absence of GSDMD expression, the Nlrp1a inflammasome is able to recruit and activate CASP8, leading to activation of gasdermin-E (GSDME). Its function is as follows. Constitutes the precursor of the Nlrp1a inflammasome, which mediates autoproteolytic processing within the FIIND domain to generate the N-terminal and C-terminal parts, which are associated non-covalently in absence of pathogens and other damage-associated signals. Functionally, regulatory part that prevents formation of the Nlrp1a inflammasome: in absence of pathogens and other damage-associated signals, interacts with the C-terminal part of Nlrp1a (NACHT, LRR and PYD domains-containing protein 1a, C-terminus), preventing activation of the Nlrp1a inflammasome. In response to pathogen-associated signals, this part is ubiquitinated by the N-end rule pathway and degraded by the proteasome, releasing the cleaved C-terminal part of the protein, which polymerizes and forms the Nlrp1a inflammasome. In terms of biological role, constitutes the active part of the Nlrp1a inflammasome. In absence of pathogens and other damage-associated signals, interacts with the N-terminal part of Nlrp1a (NACHT, LRR and PYD domains-containing protein 1a, N-terminus), preventing activation of the Nlrp1a inflammasome. In response to pathogen-associated signals, the N-terminal part of Nlrp1a is degraded by the proteasome, releasing this form, which polymerizes to form the Nlrp1a inflammasome complex: the Nlrp1a inflammasome complex then directly recruits pro-caspase-1 (proCASP1) and promotes caspase-1 (CASP1) activation, leading to gasdermin-D (GSDMD) cleavage and subsequent pyroptosis. This chain is NACHT, LRR and PYD domains-containing protein 1a allele 5, found in Rattus norvegicus (Rat).